Here is a 418-residue protein sequence, read N- to C-terminus: Xanthosine permease (418 aa).

The Cytoplasmic portion of the chain corresponds to Met1–Val9. A helical transmembrane segment spans residues Met10–Ile30. Topologically, residues Asn31 to Gly41 are periplasmic. Residues Met42 to Ala62 form a helical membrane-spanning segment. The Cytoplasmic portion of the chain corresponds to Asp63–Arg70. 2 consecutive transmembrane segments (helical) span residues Ala71–Asp91 and Pro92–Leu112. Residues Ser113 to Arg136 lie on the Cytoplasmic side of the membrane. The chain crosses the membrane as a helical span at residues Val137–Leu157. Topologically, residues Ser158–Ser159 are periplasmic. Residues Leu160 to Pro180 traverse the membrane as a helical segment. Residues Lys181–Arg209 are Cytoplasmic-facing. The helical transmembrane segment at Met210–Phe230 threads the bilayer. The Periplasmic segment spans residues Gly231–Ser254. The helical transmembrane segment at Ile255–Leu275 threads the bilayer. Over Lys276–Arg277 the chain is Cytoplasmic. A helical membrane pass occupies residues Phe278 to Phe298. Topologically, residues Ala299–Thr306 are periplasmic. The helical transmembrane segment at Gly307–Ile327 threads the bilayer. Residues Ser328–Leu348 are Cytoplasmic-facing. The chain crosses the membrane as a helical span at residues Phe349–Val369. Residues Asp370–Gln381 are Periplasmic-facing. A helical membrane pass occupies residues Thr382–Phe402. Residues Lys403 to His418 lie on the Cytoplasmic side of the membrane.

This sequence belongs to the major facilitator superfamily. Nucleoside:H(+) symporter (NHS) (TC 2.A.1.10) family.

The protein resides in the cell inner membrane. It catalyses the reaction xanthosine(in) + H(+)(in) = xanthosine(out) + H(+)(out). With respect to regulation, transport is abolished by the proton uncoupler 2,4-dinitrophenol. Its function is as follows. Uptake of xanthosine. Can also transport other nucleosides such as inosine, adenosine, cytidine, uridine and thymidine. Transport is driven by a proton motive force. The protein is Xanthosine permease of Escherichia coli (strain K12).